The primary structure comprises 321 residues: Transcription factor ATOH8 (321 aa).

2 disordered regions span residues 59-193 and 203-222; these read GLRD…SSYS and HQDS…AASS. The span at 70 to 85 shows a compositional bias: pro residues; the sequence is VPVPVPVPVPVAPAVP. Basic and acidic residues predominate over residues 93 to 109; it reads AGERGGSRAPEVSDARK. The span at 121-132 shows a compositional bias: pro residues; that stretch reads LPTPPPPPPPAP. A compositionally biased stretch (low complexity) spans 133–143; it reads QSQAPGGPEAQ. The span at 160–186 shows a compositional bias: pro residues; it reads PARPAPSAPPAPPAPPESTVRPAPPTR. The segment at 230 to 243 is basic motif; degenerate; that stretch reads TRRLLANARERTRV. The 53-residue stretch at 230–282 folds into the bHLH domain; it reads TRRLLANARERTRVHTISAAFEALRKQVPCYSYGQKLSKLAILRIACNYILSL. A helix-loop-helix motif region spans residues 244–282; the sequence is HTISAAFEALRKQVPCYSYGQKLSKLAILRIACNYILSL.

As to quaternary structure, efficient DNA binding requires dimerization with another bHLH protein. Interacts with NEUROG3 and NEUROD1. Interacts with ZFPM2; mediates indirect interaction with GATA4. Forms a heterodimer with TCF3; repress transcription of TCF3 and TCF3/NEUROG3 dimer-induced transactivation of E box-dependent promoters. As to expression, expressed in lung, liver, kidney, heart and pancreas. Expressed in endothel of umbilical vessels.

It is found in the nucleus. The protein resides in the nucleus speckle. It localises to the cytoplasm. In terms of biological role, transcription factor that binds a palindromic (canonical) core consensus DNA sequence 5'-CANNTG- 3' known as an E-box element, possibly as a heterodimer with other bHLH proteins. Regulates endothelial cell proliferation, migration and tube-like structures formation. Modulates endothelial cell differentiation through NOS3. May be implicated in specification and differentiation of neuronal cell lineages in the brain. May participate in kidney development and may be involved in podocyte differentiation. During early embryonic development is involved in tissue-specific differentiation processes that are dependent on class II bHLH factors and namely modulates the differentiation program initiated by the pro-endocrine factor NEUROG3. During myogenesis, may play a role during the transition of myoblasts from the proliferative phase to the differentiation phase. Positively regulates HAMP transcription in two ways, firstly by acting directly on the HAMP promoter via E-boxes binding and indirectly through increased phosphorylation of SMAD protein complex. Repress NEUROG3-dependent gene activation in a gene-specific manner through at least two mechanisms; requires only either the sequestering of a general partner such as TCF3 through heterodimerization, either also requires binding of the bHLH domain to DNA via a basic motif. This chain is Transcription factor ATOH8, found in Homo sapiens (Human).